The chain runs to 334 residues: N-acetyl-gamma-glutamyl-phosphate reductase (334 aa).

Cys-154 is a catalytic residue.

The protein belongs to the NAGSA dehydrogenase family. Type 1 subfamily.

The protein resides in the cytoplasm. The catalysed reaction is N-acetyl-L-glutamate 5-semialdehyde + phosphate + NADP(+) = N-acetyl-L-glutamyl 5-phosphate + NADPH + H(+). Its pathway is amino-acid biosynthesis; L-arginine biosynthesis; N(2)-acetyl-L-ornithine from L-glutamate: step 3/4. Catalyzes the NADPH-dependent reduction of N-acetyl-5-glutamyl phosphate to yield N-acetyl-L-glutamate 5-semialdehyde. The protein is N-acetyl-gamma-glutamyl-phosphate reductase of Vibrio parahaemolyticus serotype O3:K6 (strain RIMD 2210633).